The primary structure comprises 170 residues: RNA pyrophosphohydrolase (170 aa).

In terms of domain architecture, Nudix hydrolase spans 9 to 162 (PYRPCAGIMV…KRAVYEKVVA (154 aa)). The Nudix box signature appears at 50–71 (GGIDDGERPLTAAIRELYEETG).

The protein belongs to the Nudix hydrolase family. RppH subfamily. A divalent metal cation serves as cofactor.

Accelerates the degradation of transcripts by removing pyrophosphate from the 5'-end of triphosphorylated RNA, leading to a more labile monophosphorylated state that can stimulate subsequent ribonuclease cleavage. In Agrobacterium fabrum (strain C58 / ATCC 33970) (Agrobacterium tumefaciens (strain C58)), this protein is RNA pyrophosphohydrolase.